The chain runs to 789 residues: Ribonucleoside-diphosphate reductase large subunit (789 aa).

Residues threonine 207, 222–223 (SC), glycine 253, 435–439 (NLCTE), and 620–624 (PTVSS) each bind substrate. Cysteine 223 and cysteine 452 are joined by a disulfide. Asparagine 435 acts as the Proton acceptor in catalysis. Cysteine 437 acts as the Cysteine radical intermediate in catalysis. The Proton acceptor role is filled by glutamate 439.

The protein belongs to the ribonucleoside diphosphate reductase large chain family. In terms of assembly, heterotetramer composed of a homodimer of the large subunit (R1) and a homodimer of the small subunit (R2). Larger multisubunit protein complex are also active, composed of (R1)n(R2)n.

It catalyses the reaction a 2'-deoxyribonucleoside 5'-diphosphate + [thioredoxin]-disulfide + H2O = a ribonucleoside 5'-diphosphate + [thioredoxin]-dithiol. In terms of biological role, ribonucleoside-diphosphate reductase holoenzyme provides the precursors necessary for viral DNA synthesis. Allows virus growth in non-dividing cells, as well as reactivation from latency in infected hosts. Catalyzes the biosynthesis of deoxyribonucleotides from the corresponding ribonucleotides. The chain is Ribonucleoside-diphosphate reductase large subunit from Equus caballus (Horse).